The chain runs to 150 residues: Cell division protein SepF (150 aa).

Belongs to the SepF family. Homodimer. Interacts with FtsZ.

It is found in the cytoplasm. Functionally, cell division protein that is part of the divisome complex and is recruited early to the Z-ring. Probably stimulates Z-ring formation, perhaps through the cross-linking of FtsZ protofilaments. Its function overlaps with FtsA. The protein is Cell division protein SepF of Clostridium kluyveri (strain NBRC 12016).